We begin with the raw amino-acid sequence, 232 residues long: NKG2-D type II integral membrane protein (232 aa).

Residues 1-66 (MALIRDRKSH…IEKLKISPMF (66 aa)) are Cytoplasmic-facing. A helical; Signal-anchor for type II membrane protein transmembrane segment spans residues 67-89 (VVRVLAIALAIRFTLNTLMWLAI). At 90–232 (FKETFQPVLC…NTYICMKRAV (143 aa)) the chain is on the extracellular side. Disulfide bonds link Cys112–Cys121 and Cys115–Cys126. The 107-residue stretch at 122–228 (HRNNCYQFFN…CANLNTYICM (107 aa)) folds into the C-type lectin domain. N-linked (GlcNAc...) asparagine glycosylation is found at Asn137, Asn147, and Asn179. 2 disulfides stabilise this stretch: Cys143/Cys227 and Cys205/Cys219.

As to quaternary structure, homodimer; disulfide-linked. Heterohexamer composed of two subunits of KLRK1 and four subunits of HCST/DAP10. Isoform 1 (via transmembrane domain) interacts with HCST/DAP10; the interaction is required for KLRK1 cell surface expression on activated CD8(+) T-cells, but is dispensable on activated TYROBP-expressing NK cells. Isoform 2 (via transmembrane domain) interacts with HCST/DAP10 (via transmembrane domain); the interaction is required for KLRK1 NK cell surface expression and induces NK cell-mediated cytotoxicity. Isoform 2 (via transmembrane domain) interacts with TYROBP (via transmembrane domain); the interaction is required for KLRK1 NK cell surface expression and induce NK cell-mediated cytotoxicity and cytokine secretion. Isoform 1 does not interact with TYROBP. Interacts with CEACAM1; recruits PTPN6 that dephosphorylates VAV1. In terms of tissue distribution, expressed in natural killer (NK) cells, activated CD8(+) alpha-beta and gamma-delta T-cells and natural killer T (NKT) cells (at protein level). May be expressed on dendritic cell (DC). Isoform 1 is strongly expressed in natural killer (NK) cells. Isoform 2 is weakly expressed in natural killer (NK) cells. Isoform 1 and isoform 2 are expressed in stimulated, but not in unstimulated, CD8(+) T-cells and macrophages.

The protein resides in the cell membrane. Its function is as follows. Functions as an activating and costimulatory receptor involved in immunosurveillance upon binding to various cellular stress-inducible ligands displayed at the surface of autologous tumor cells and virus-infected cells. Provides both stimulatory and costimulatory innate immune responses on activated killer (NK) cells, leading to cytotoxic activity. Acts as a costimulatory receptor for T-cell receptor (TCR) in CD8(+) T-cell-mediated adaptive immune responses by amplifying T-cell activation. Stimulates perforin-mediated elimination of ligand-expressing tumor cells. Signaling involves calcium influx, culminating in the expression of TNF-alpha. Participates in NK cell-mediated bone marrow graft rejection. May play a regulatory role in differentiation and survival of NK cells. Binds to ligands belonging to various subfamilies of MHC class I-related glycoproteins including RAET1A, RAET1B, RAET1C, RAET1D, RAET1E, H60 and MULT1. The sequence is that of NKG2-D type II integral membrane protein (Klrk1) from Mus musculus (Mouse).